Here is a 341-residue protein sequence, read N- to C-terminus: Pyrophosphate--fructose 6-phosphate 1-phosphotransferase (341 aa).

Position 10 (glycine 10) interacts with diphosphate. Glutamate 103 contributes to the Mg(2+) binding site. Substrate is bound by residues 125-127 (TID), arginine 162, 169-171 (MGR), glutamate 221, arginine 265, and 271-274 (HTQR). Aspartate 127 (proton acceptor) is an active-site residue.

Belongs to the phosphofructokinase type A (PFKA) family. Mixed-substrate PFK group III subfamily. Homotetramer. Mg(2+) is required as a cofactor.

Its subcellular location is the cytoplasm. The catalysed reaction is beta-D-fructose 6-phosphate + diphosphate = beta-D-fructose 1,6-bisphosphate + phosphate + H(+). It participates in carbohydrate degradation; glycolysis; D-glyceraldehyde 3-phosphate and glycerone phosphate from D-glucose: step 3/4. Its activity is regulated as follows. Non-allosteric. In terms of biological role, catalyzes the phosphorylation of D-fructose 6-phosphate, the first committing step of glycolysis. Uses inorganic phosphate (PPi) as phosphoryl donor instead of ATP like common ATP-dependent phosphofructokinases (ATP-PFKs), which renders the reaction reversible, and can thus function both in glycolysis and gluconeogenesis. Consistently, PPi-PFK can replace the enzymes of both the forward (ATP-PFK) and reverse (fructose-bisphosphatase (FBPase)) reactions. This chain is Pyrophosphate--fructose 6-phosphate 1-phosphotransferase, found in Amycolatopsis methanolica.